A 1060-amino-acid polypeptide reads, in one-letter code: Protein transport protein Sec16B (1060 aa).

The disordered stretch occupies residues 1–86; the sequence is MELWAPQRLP…GDWHQPVSGV (86 aa). Residues 34 to 224 form a required for endoplasmic reticulum localization region; the sequence is RPVPHSWHNG…PSLASESNLL (191 aa). Basic and acidic residues predominate over residues 41-50; that stretch reads HNGERFHQWQ. Residues 51 to 60 show a composition bias toward polar residues; it reads DNRGSPQPQQ. Residues Ser-55, Ser-143, Ser-167, Ser-188, and Ser-191 each carry the phosphoserine modification. Disordered regions lie at residues 163–236, 245–264, 711–733, 770–796, and 834–1060; these read ENQH…SSSY, APER…QADV, KVAG…GGTT, PSPQ…GTPR, and PGEN…TQPC. Composition is skewed to polar residues over residues 165-195 and 213-222; these read QHSP…NSGQ and NKPSLASESN. The span at 223 to 236 shows a compositional bias: low complexity; sequence LLQQRESGLSSSSY. Ser-254 and Ser-258 each carry phosphoserine. A central conserved domain (CCD); required for localization to endoplasmic reticulum exit sites region spans residues 271–713; that stretch reads APMKFYIPHV…LRRQLEQKVA (443 aa). A compositionally biased stretch (polar residues) spans 837–847; it reads NTVSQETSQPP. Position 858 is a phosphothreonine (Thr-858). Ser-868, Ser-871, Ser-874, Ser-882, and Ser-883 each carry phosphoserine. 2 stretches are compositionally biased toward basic and acidic residues: residues 875 to 890 and 899 to 908; these read AKED…DKNS and KLGDGKEHTK. Residues 909–918 show a composition bias toward low complexity; the sequence is SSGFGWFSWF. A compositionally biased stretch (acidic residues) spans 930–941; sequence GDEDSSDSPDSE. Over residues 991–1001 the composition is skewed to gly residues; the sequence is AAAGAGVGGLS. Polar residues predominate over residues 1031 to 1046; that stretch reads NPSQVPQLPTATSLNR.

This sequence belongs to the SEC16 family. As to quaternary structure, SEC16A and SEC16B are each present in multiple copies in a heteromeric complex. Interacts with TFG. Interacts with SEC13. As to expression, ubiquitous.

It is found in the endoplasmic reticulum membrane. The protein localises to the golgi apparatus membrane. Functionally, plays a role in the organization of the endoplasmic reticulum exit sites (ERES), also known as transitional endoplasmic reticulum (tER). Required for secretory cargo traffic from the endoplasmic reticulum to the Golgi apparatus. Involved in peroxisome biogenesis. Regulates the transport of peroxisomal biogenesis factors PEX3 and PEX16 from the ER to peroxisomes. The protein is Protein transport protein Sec16B (SEC16B) of Homo sapiens (Human).